A 250-amino-acid chain; its full sequence is UPF0259 membrane protein Spro_2675 (250 aa).

The next 6 helical transmembrane spans lie at 23–43 (ILML…AFSP), 87–107 (AATF…LTLI), 132–152 (LLLL…LFVV), 156–176 (IMAI…KGVF), 192–212 (VIVP…FMVS), and 222–242 (ASVV…IYLF).

Belongs to the UPF0259 family.

Its subcellular location is the cell inner membrane. The chain is UPF0259 membrane protein Spro_2675 from Serratia proteamaculans (strain 568).